A 442-amino-acid chain; its full sequence is tRNA-2-methylthio-N(6)-dimethylallyladenosine synthase (442 aa).

The MTTase N-terminal domain maps to 6–122; it reads RKFYIHTFGC…LPVLIAEAGK (117 aa). [4Fe-4S] cluster-binding residues include Cys-15, Cys-51, Cys-85, Cys-157, Cys-161, and Cys-164. Positions 143 to 373 constitute a Radical SAM core domain; that stretch reads RTQSLTAFVP…IDLQNGISAE (231 aa). The TRAM domain occupies 376–439; sequence RLAIGSVVEV…SATLIGRAAE (64 aa).

The protein belongs to the methylthiotransferase family. MiaB subfamily. As to quaternary structure, monomer. It depends on [4Fe-4S] cluster as a cofactor.

It is found in the cytoplasm. It carries out the reaction N(6)-dimethylallyladenosine(37) in tRNA + (sulfur carrier)-SH + AH2 + 2 S-adenosyl-L-methionine = 2-methylsulfanyl-N(6)-dimethylallyladenosine(37) in tRNA + (sulfur carrier)-H + 5'-deoxyadenosine + L-methionine + A + S-adenosyl-L-homocysteine + 2 H(+). Catalyzes the methylthiolation of N6-(dimethylallyl)adenosine (i(6)A), leading to the formation of 2-methylthio-N6-(dimethylallyl)adenosine (ms(2)i(6)A) at position 37 in tRNAs that read codons beginning with uridine. The sequence is that of tRNA-2-methylthio-N(6)-dimethylallyladenosine synthase from Chlorobium limicola (strain DSM 245 / NBRC 103803 / 6330).